A 418-amino-acid chain; its full sequence is MTLLALGINHKTAPVSLRERVSFSPDKLDQALDSLLAQPMVQGGVVLSTCNRTELYLSVEERDDLQEALIRWLCDYHNLNEDDLRNSLYWHQDNDAVSHLMRVASGLDSLVLGEPQILGQVKKAFADSQKGHMKASELERMFQKSFSVAKRVRTETDIGASAVSVAFAACTLARQIFESLSTVTVLLVGAGETIELVARHLREHKVQKMIIANRTRERAQILADEVGAEVIALSDIDERLREADIIISSTASPLPIIGKGMVERALKSRRNQPMLLVDIAVPRDVEPEVGKLANAYLYSVDDLQSIISHNLAQRKAAAVEAETIVAQEASEFMAWLRAQSASETIRDYRSQAEQVRDELTAKALAALEQGGDAQTIMQDLAWKLTNRLIHAPTKSLQQAARDGDNERLNILRDSLGLE.

Substrate is bound by residues 49 to 52, Ser-109, 114 to 116, and Gln-120; these read TCNR and EPQ. The active-site Nucleophile is Cys-50. NADP(+) is bound at residue 189-194; the sequence is GAGETI.

The protein belongs to the glutamyl-tRNA reductase family. Homodimer.

The enzyme catalyses (S)-4-amino-5-oxopentanoate + tRNA(Glu) + NADP(+) = L-glutamyl-tRNA(Glu) + NADPH + H(+). The protein operates within porphyrin-containing compound metabolism; protoporphyrin-IX biosynthesis; 5-aminolevulinate from L-glutamyl-tRNA(Glu): step 1/2. Catalyzes the NADPH-dependent reduction of glutamyl-tRNA(Glu) to glutamate 1-semialdehyde (GSA). In Escherichia coli O45:K1 (strain S88 / ExPEC), this protein is Glutamyl-tRNA reductase.